Here is a 792-residue protein sequence, read N- to C-terminus: Phenylalanine--tRNA ligase beta subunit (792 aa).

The 116-residue stretch at 39 to 154 folds into the tRNA-binding domain; the sequence is LYSFASVITA…EATPLGEDLA (116 aa). A B5 domain is found at 403-480; that stretch reads RELKEVALRP…ESWNIETQNP (78 aa). Mg(2+) contacts are provided by Asp-456, Asp-462, Glu-465, and Glu-466. The FDX-ACB domain occupies 695 to 791; that stretch reads AIYPSSFRDL…LLTDTKGTIN (97 aa).

It belongs to the phenylalanyl-tRNA synthetase beta subunit family. Type 1 subfamily. As to quaternary structure, tetramer of two alpha and two beta subunits. The cofactor is Mg(2+).

Its subcellular location is the cytoplasm. The catalysed reaction is tRNA(Phe) + L-phenylalanine + ATP = L-phenylalanyl-tRNA(Phe) + AMP + diphosphate + H(+). This chain is Phenylalanine--tRNA ligase beta subunit (pheT), found in Chlamydia pneumoniae (Chlamydophila pneumoniae).